We begin with the raw amino-acid sequence, 424 residues long: Tyrosine--tRNA ligase (424 aa).

L-tyrosine is bound at residue Y37. Positions 42–51 match the 'HIGH' region motif; it reads PTADSLHLGH. An N6-acetyllysine modification is found at K144. Residues Y175 and Q179 each coordinate L-tyrosine. Positions 235–239 match the 'KMSKS' region motif; that stretch reads KFGKT. ATP is bound at residue K238. Residues 357–414 enclose the S4 RNA-binding domain; it reads ADLMQALVDSELQPSRGQARKTIASNAITINGEKQSDPEYFFKEEDRLFGRFTLLRRG.

Belongs to the class-I aminoacyl-tRNA synthetase family. TyrS type 1 subfamily. In terms of assembly, homodimer.

It is found in the cytoplasm. It carries out the reaction tRNA(Tyr) + L-tyrosine + ATP = L-tyrosyl-tRNA(Tyr) + AMP + diphosphate + H(+). Catalyzes the attachment of tyrosine to tRNA(Tyr) in a two-step reaction: tyrosine is first activated by ATP to form Tyr-AMP and then transferred to the acceptor end of tRNA(Tyr). The polypeptide is Tyrosine--tRNA ligase (Escherichia coli O8 (strain IAI1)).